Here is a 280-residue protein sequence, read N- to C-terminus: Putative pyruvate, phosphate dikinase regulatory protein (280 aa).

147-154 (GASRSSKT) provides a ligand contact to ADP.

This sequence belongs to the pyruvate, phosphate/water dikinase regulatory protein family. PDRP subfamily.

The catalysed reaction is N(tele)-phospho-L-histidyl/L-threonyl-[pyruvate, phosphate dikinase] + ADP = N(tele)-phospho-L-histidyl/O-phospho-L-threonyl-[pyruvate, phosphate dikinase] + AMP + H(+). The enzyme catalyses N(tele)-phospho-L-histidyl/O-phospho-L-threonyl-[pyruvate, phosphate dikinase] + phosphate + H(+) = N(tele)-phospho-L-histidyl/L-threonyl-[pyruvate, phosphate dikinase] + diphosphate. In terms of biological role, bifunctional serine/threonine kinase and phosphorylase involved in the regulation of the pyruvate, phosphate dikinase (PPDK) by catalyzing its phosphorylation/dephosphorylation. The polypeptide is Putative pyruvate, phosphate dikinase regulatory protein (Pelobacter propionicus (strain DSM 2379 / NBRC 103807 / OttBd1)).